The chain runs to 309 residues: MPIRVQDELPAVNFLRNENVFVMTTTRATTQEIRPLKVLILNLMPKKIETENQFLRLLSNSPLQVDIQLLRIDARESRNTPAEHLNNFYCNFDEICDQNFDGLIVTGAPLGLVEFNDVAYWPQIKQVLEWAKDHVTSTLFVCWAVQAALNILYGIPKQTRAEKISGVYEHHILHPHALLTRGFDDSFLAPHSRYADFPAGLIRDYTDLEILAETEEGDAYLFASKDKRIAFVTGHPEYDANTLASEYFRDVEAGLNPEIPHNYFPQNDPQNKPRATWRSHGNLLFANWLNYYVYQITPYDLRHMNPTLE.

Cysteine 142 (acyl-thioester intermediate) is an active-site residue. The substrate site is built by lysine 163 and serine 192. Histidine 235 functions as the Proton acceptor in the catalytic mechanism. Glutamate 237 is a catalytic residue. Arginine 249 is a substrate binding site.

It belongs to the MetA family.

It localises to the cytoplasm. It carries out the reaction L-homoserine + succinyl-CoA = O-succinyl-L-homoserine + CoA. It participates in amino-acid biosynthesis; L-methionine biosynthesis via de novo pathway; O-succinyl-L-homoserine from L-homoserine: step 1/1. Transfers a succinyl group from succinyl-CoA to L-homoserine, forming succinyl-L-homoserine. The protein is Homoserine O-succinyltransferase of Klebsiella pneumoniae subsp. pneumoniae (strain ATCC 700721 / MGH 78578).